Consider the following 313-residue polypeptide: E3 ubiquitin-protein ligase SGIP1 (313 aa).

The 50-residue stretch at 16-65 folds into the F-box domain; it reads REYSKEIPIDLLIEIFSRLSTGDIARCRCVSKIWSSVPRLRDFTELFLKI.

In terms of assembly, interacts with SGS3 in cytoplasmic granules.

It localises to the cytoplasmic granule. It carries out the reaction S-ubiquitinyl-[E2 ubiquitin-conjugating enzyme]-L-cysteine + [acceptor protein]-L-lysine = [E2 ubiquitin-conjugating enzyme]-L-cysteine + N(6)-ubiquitinyl-[acceptor protein]-L-lysine.. Its pathway is protein degradation; proteasomal ubiquitin-dependent pathway. The protein operates within protein modification; protein ubiquitination. E3 ubiquitin-protein ligase which triggers the ubiquitination and subsequent degradation of SGS3 in response to heat. Involved in the mechanisms necessary for quick response to heat and subsequent heritable transgenerational memory of heat acclimation (global warming) such as early flowering and attenuated immunity; this process includes epigenetic regulation as well as post-transcriptional gene silencing (PTGS). In response to heat, HSFA2 is activated and promotes the expression of REF6 which in turn derepresses HSFA2, thus establishing an inheritable feedback loop able to trigger SGIP1 and subsequent SGIP1-mediated SGS3 degradation; this prevents the biosynthesis of trans-acting siRNA (tasiRNA) and leads to the release of HTT5, which drives early flowering but attenuates immunity. The protein is E3 ubiquitin-protein ligase SGIP1 of Arabidopsis thaliana (Mouse-ear cress).